Consider the following 165-residue polypeptide: Transcription antitermination protein NusB (165 aa).

It belongs to the NusB family.

In terms of biological role, involved in transcription antitermination. Required for transcription of ribosomal RNA (rRNA) genes. Binds specifically to the boxA antiterminator sequence of the ribosomal RNA (rrn) operons. This Rhodococcus erythropolis (strain PR4 / NBRC 100887) protein is Transcription antitermination protein NusB.